The chain runs to 109 residues: Nucleoid-associated protein A1S_1684 (109 aa).

Belongs to the YbaB/EbfC family. Homodimer.

Its subcellular location is the cytoplasm. The protein localises to the nucleoid. In terms of biological role, binds to DNA and alters its conformation. May be involved in regulation of gene expression, nucleoid organization and DNA protection. The protein is Nucleoid-associated protein A1S_1684 of Acinetobacter baumannii (strain ATCC 17978 / DSM 105126 / CIP 53.77 / LMG 1025 / NCDC KC755 / 5377).